We begin with the raw amino-acid sequence, 135 residues long: MSKFAQKIEKLKKSLLNRLEEQDIVSVDVASKGSVYIGLLGFRQDDRKAVTLYVRGQNPKKKLYVNLDEVDNYIRVFEFLKKHKEELEKIVGKPPKSTSAPDIDELEEEPDEETEEKSEEKTEKKKKESEDEDEL.

Residues 68–135 adopt a coiled-coil conformation; it reads DEVDNYIRVF…KKESEDEDEL (68 aa). The segment at 88–135 is disordered; the sequence is EKIVGKPPKSTSAPDIDELEEEPDEETEEKSEEKTEKKKKESEDEDEL. Acidic residues predominate over residues 102–117; the sequence is DIDELEEEPDEETEEK. Residues 118–129 show a composition bias toward basic and acidic residues; it reads SEEKTEKKKKES.

This is an uncharacterized protein from Acidianus hospitalis (AFV-1).